The following is a 118-amino-acid chain: Elongin-B (118 aa).

An N-acetylmethionine modification is found at Met1. In terms of domain architecture, Ubiquitin-like spans 1 to 66 (MDVFLMIRRH…LGECGFTSQT (66 aa)). A Phosphothreonine modification is found at Thr84. Residues 92-118 (PFSSPPELPDVMKPQDSGSSANEQAVQ) form a disordered region. Over residues 107–118 (DSGSSANEQAVQ) the composition is skewed to polar residues. 2 positions are modified to phosphoserine: Ser108 and Ser111.

It belongs to the Elongin B family. In terms of assembly, heterotrimer of an A (ELOA, ELOA2 or ELOA3P), ELOB and ELOC subunit. The elongin BC complex interacts with EPOP; leading to recruit the elongin BC complex to Polycomb group (PcG) target genes, thereby restricting excessive activity of the PRC2/EED-EZH2 complex. Component of multiple cullin-RING E3 ubiquitin-protein ligase complexes composed of Elongin BC (ELOB and ELOC), a cullin (either CUL2 or CUL5), a catalytic subunit (either RBX1 or RNF7/RBX2), as well as a substrate adapter protein that can be either ASB2, ASB9, ASB11, KLHDC2, KLHDC3, KLHDC10, APPBP2, FEM1A, FEM1B, FEM1C, LRR1, PCMTD1, SOCS1, SOCS2, SOCS5, SPSB1, SPSB3, ELOA, VHL, WSB1 or RAB40C. As part of the Elongin BC E3 ubiquitin ligase complex; interacts with NRBP1. May also interact with DCUN1D1, DCUN1D2, DCUN1D3 and DCUN1D5. May form oligomers as a KLHDC2/KLHDC3-ELOB-ELOC complex; this interaction is autoinhibitory for the E3 ligase complex as the substrate-binding site of KLHDC2/KLHDC3 is blocked in the oligomer. (Microbial infection) Following infection by HIV-1 virus, component of a cullin-5-RING E3 ubiquitin-protein ligase complex (ECS complex) hijacked by the HIV-1 Vif protein. As to quaternary structure, (Microbial infection) Substrate adapter protein can be a viral protein such as HIV Vif. In terms of assembly, (Microbial infection) Interacts with molluscum contagiosum virus MC132. (Microbial infection) Interacts with herpes virus 8 virus protein LANA1.

The protein localises to the nucleus. Its pathway is protein modification; protein ubiquitination. In terms of biological role, SIII, also known as elongin, is a general transcription elongation factor that increases the RNA polymerase II transcription elongation past template-encoded arresting sites. Subunit A is transcriptionally active and its transcription activity is strongly enhanced by binding to the dimeric complex of the SIII regulatory subunits B and C (elongin BC complex). In embryonic stem cells, the elongin BC complex is recruited by EPOP to Polycomb group (PcG) target genes in order generate genomic region that display both active and repressive chromatin properties, an important feature of pluripotent stem cells. Its function is as follows. Core component of multiple cullin-2 and cullin-5-RING E3 ubiquitin-protein ligase complexes (ECS complexes), which mediate the ubiquitination of target proteins. By binding to BC-box motifs it seems to link target recruitment subunits, like VHL and members of the SOCS box family, to Cullin/RBX1 modules that activate E2 ubiquitination enzymes. Component the von Hippel-Lindau ubiquitination complex CBC(VHL). A number of ECS complexes (containing either KLHDC2, KLHDC3, KLHDC10, APPBP2, FEM1A, FEM1B or FEM1C as substrate-recognition component) are part of the DesCEND (destruction via C-end degrons) pathway, which recognizes a C-degron located at the extreme C terminus of target proteins, leading to their ubiquitination and degradation. The ECS(ASB9) complex mediates ubiquitination and degradation of CKB. As part of a multisubunit ubiquitin ligase complex, polyubiquitinates monoubiquitinated POLR2A. ECS(LRR1) ubiquitinates MCM7 and promotes CMG replisome disassembly by VCP and chromatin extraction during S-phase. As part of the ECS(RAB40C) complex, mediates ANKRD28 ubiquitination and degradation, thereby inhibiting protein phosphatase 6 (PP6) complex activity and focal adhesion assembly during cell migration. Functionally, (Microbial infection) Following infection by HIV-1 virus, component of a cullin-5-RING E3 ubiquitin-protein ligase complex (ECS complex) hijacked by the HIV-1 Vif protein, which catalyzes ubiquitination and degradation of APOBEC3F and APOBEC3G. The complex can also ubiquitinate APOBEC3H to some extent. This chain is Elongin-B, found in Homo sapiens (Human).